Reading from the N-terminus, the 73-residue chain is Protein SlyX homolog (73 aa).

Belongs to the SlyX family.

The polypeptide is Protein SlyX homolog (Actinobacillus pleuropneumoniae serotype 5b (strain L20)).